The sequence spans 241 residues: uncharacterized protein (241 aa).

This is an uncharacterized protein from Ictaluridae (bullhead catfishes).